The sequence spans 322 residues: Ferrochelatase (322 aa).

2 residues coordinate Fe cation: His-195 and Glu-276.

Belongs to the ferrochelatase family.

It is found in the cytoplasm. The catalysed reaction is heme b + 2 H(+) = protoporphyrin IX + Fe(2+). It functions in the pathway porphyrin-containing compound metabolism; protoheme biosynthesis; protoheme from protoporphyrin-IX: step 1/1. Catalyzes the ferrous insertion into protoporphyrin IX. The protein is Ferrochelatase of Edwardsiella ictaluri (strain 93-146).